Here is a 222-residue protein sequence, read N- to C-terminus: MKVLILACLVALALAREQEELNVVGETVESLSSSEESITHINKKIEKFQSEEQQQTEDELQDKIHPFAQAQSLVYPFTGPIPNSLPQNILPLTQTPVVVPPFLQPEIMGVPKVKETMVPKHKEMPFPKYPVEPFTESQSLTLTDVEKLHLPLPLVQSWMHQPPQPLPPTVMFPPQSVLSLSQPKVLPVPQKAVPQRDMPIQAFLLYQEPVLGPVRGPFPILV.

A signal peptide spans methionine 1 to alanine 15. Threonine 27 is modified (phosphothreonine). Phosphoserine occurs at positions 30, 32, 33, and 34.

Belongs to the beta-casein family. As to expression, mammary gland specific. Secreted in milk.

Its subcellular location is the secreted. Important role in determination of the surface properties of the casein micelles. In Ovis aries (Sheep), this protein is Beta-casein (CSN2).